The chain runs to 1183 residues: LRR receptor-like serine/threonine-protein kinase FLS2 (1183 aa).

The first 41 residues, 1 to 41, serve as a signal peptide directing secretion; that stretch reads MERNKFASKMSQHYTKTICIAVVLVAVLFSLSSAAAAGSGA. Residues 42–809 lie on the Extracellular side of the membrane; it reads AVSVQLEALL…GKKRVFSRTG (768 aa). A disulfide bond links Cys87 and Cys94. N-linked (GlcNAc...) asparagine glycosylation is found at Asn88 and Asn120. LRR repeat units follow at residues 97–120, 121–145, 147–169, 171–193, 194–217, 218–241, 242–265, 267–289, 290–313, 315–337, 338–361, 363–385, and 386–409; these read AGQV…FLGN, ISTL…LGRL, ELEQ…LCNC, AMWA…IGDL, SNLE…MAKL, KGIM…IGDL, SNLQ…LGRC, NLTL…LGEL, TNLE…LRRC, SLLN…LGEL, PSLQ…LTNL, NLTI…IGSL, and RNLR…ISNC. A disulfide bridge connects residues Cys167 and Cys189. N-linked (GlcNAc...) asparagine glycans are attached at residues Asn168 and Asn181. Asn267 carries an N-linked (GlcNAc...) asparagine glycan. N-linked (GlcNAc...) asparagine glycans are attached at residues Asn363, Asn395, Asn408, and Asn414. 14 LRR repeats span residues 433–457, 459–480, 481–505, 507–529, 530–553, 555–577, 578–600, 601–625, 627–651, 652–675, 676–699, 701–724, 725–748, and 749–773; these read LQSL…LFDC, QLQK…LVGQ, LGNL…IGNM, KLIS…ISNM, SSLQ…VFEL, QLTI…VANL, RSLS…ALGR, LDQL…VIAS, SNVQ…IGGL, VMVQ…LAGC, KNLY…LFPQ, DLLT…IAAL, KHIQ…LANL, and TALR…VFRN. N-linked (GlcNAc...) asparagine glycans are attached at residues Asn483, Asn504, and Asn528. N-linked (GlcNAc...) asparagine glycosylation is present at Asn591. Asn634 is a glycosylation site (N-linked (GlcNAc...) asparagine). N-linked (GlcNAc...) asparagine glycosylation is found at Asn707, Asn747, Asn755, and Asn773. Residues 810–830 traverse the membrane as a helical segment; it reads LVILVVLIALSTLLLLMVATI. Residues 831 to 1183 are Cytoplasmic-facing; that stretch reads LLVSYRRYRR…LKMSKLVGED (353 aa). Positions 876 to 1179 constitute a Protein kinase domain; it reads FDQGNVIGSS…LSSLLKMSKL (304 aa). ATP contacts are provided by residues 882–890 and Lys908; that span reads IGSSNLSTV. Asp1013 serves as the catalytic Proton acceptor.

It belongs to the protein kinase superfamily. Ser/Thr protein kinase family. Interacts with SERK2.

The protein localises to the cell membrane. It carries out the reaction L-seryl-[protein] + ATP = O-phospho-L-seryl-[protein] + ADP + H(+). It catalyses the reaction L-threonyl-[protein] + ATP = O-phospho-L-threonyl-[protein] + ADP + H(+). Functionally, constitutes the pattern-recognition receptor (PPR) that determines the specific perception of flagellin (flg22), a potent elicitor of the defense response to pathogen-associated molecular patterns (PAMPs). Recognizes flg22 from Pseudomonas aeruginosa and Acidovorax avenae. flg22 is a peptide derived from the bacterial flagellin N-terminus sequence. Does not recognize flg22 from Xanthomonas oryzae pv. oryzae (Xoo) or Xanthomonas oryzae pv. oryzicola (Xoc). The sequence is that of LRR receptor-like serine/threonine-protein kinase FLS2 from Oryza sativa subsp. japonica (Rice).